We begin with the raw amino-acid sequence, 563 residues long: Coiled-coil domain-containing protein 38 (563 aa).

Coiled-coil stretches lie at residues 129-212 (KRNT…KTEF), 384-415 (NIEF…RSRL), and 485-522 (ERMK…AVAQ). Residues 521-550 (AQPKKKLGRRLVYHSKPPSANKQQLPLVNE) are disordered. Positions 523 to 533 (PKKKLGRRLVY) are enriched in basic residues.

In terms of assembly, interacts with CCDC42, CFAP53, IFT88 and ODF2. Interacts with CCDC146. Interacts with TEKT3. Interacts with ubiquitinated histone H2A.

It localises to the cytoplasm. The protein resides in the cytoskeleton. It is found in the microtubule organizing center. Its subcellular location is the centrosome. The protein localises to the perinuclear region. It localises to the cell projection. The protein resides in the cilium. It is found in the flagellum. In terms of biological role, essential for male fertility. Required for sperm flagellum biogenesis. Also required for acrosome biogenesis. Required for the attachment of developing acrosomes to the nucleus during spermiogenesis and may be involved in the transport of fibrous sheath components. This Macaca fascicularis (Crab-eating macaque) protein is Coiled-coil domain-containing protein 38 (CCDC38).